Reading from the N-terminus, the 237-residue chain is Ribonuclease PH (237 aa).

Phosphate contacts are provided by residues arginine 86 and 124–126; that span reads GTR.

It belongs to the RNase PH family. Homohexameric ring arranged as a trimer of dimers.

The catalysed reaction is tRNA(n+1) + phosphate = tRNA(n) + a ribonucleoside 5'-diphosphate. In terms of biological role, phosphorolytic 3'-5' exoribonuclease that plays an important role in tRNA 3'-end maturation. Removes nucleotide residues following the 3'-CCA terminus of tRNAs; can also add nucleotides to the ends of RNA molecules by using nucleoside diphosphates as substrates, but this may not be physiologically important. Probably plays a role in initiation of 16S rRNA degradation (leading to ribosome degradation) during starvation. In Shewanella baltica (strain OS223), this protein is Ribonuclease PH.